The following is a 71-amino-acid chain: Protein SlyX homolog (71 aa).

Belongs to the SlyX family.

This chain is Protein SlyX homolog, found in Stutzerimonas stutzeri (strain A1501) (Pseudomonas stutzeri).